A 190-amino-acid polypeptide reads, in one-letter code: Holliday junction branch migration complex subunit RuvA (190 aa).

The tract at residues 1 to 63 (MLDFIKGKVI…EESIEIYGFL (63 aa)) is domain I. Residues 64-139 (ESSERDLFEE…ILPSLQYEKD (76 aa)) form a domain II region. Asp139 is a region of interest (flexible linker). Positions 139-190 (DQKYDDILSALLNLGYKRLEAKEVLDKIYNNEKDEATIIRESLSILAGKDGK) are domain III.

The protein belongs to the RuvA family. In terms of assembly, homotetramer. Forms an RuvA(8)-RuvB(12)-Holliday junction (HJ) complex. HJ DNA is sandwiched between 2 RuvA tetramers; dsDNA enters through RuvA and exits via RuvB. An RuvB hexamer assembles on each DNA strand where it exits the tetramer. Each RuvB hexamer is contacted by two RuvA subunits (via domain III) on 2 adjacent RuvB subunits; this complex drives branch migration. In the full resolvosome a probable DNA-RuvA(4)-RuvB(12)-RuvC(2) complex forms which resolves the HJ.

The protein localises to the cytoplasm. Its function is as follows. The RuvA-RuvB-RuvC complex processes Holliday junction (HJ) DNA during genetic recombination and DNA repair, while the RuvA-RuvB complex plays an important role in the rescue of blocked DNA replication forks via replication fork reversal (RFR). RuvA specifically binds to HJ cruciform DNA, conferring on it an open structure. The RuvB hexamer acts as an ATP-dependent pump, pulling dsDNA into and through the RuvAB complex. HJ branch migration allows RuvC to scan DNA until it finds its consensus sequence, where it cleaves and resolves the cruciform DNA. This chain is Holliday junction branch migration complex subunit RuvA, found in Thermodesulfovibrio yellowstonii (strain ATCC 51303 / DSM 11347 / YP87).